Here is a 378-residue protein sequence, read N- to C-terminus: Protein RecA (378 aa).

Position 79 to 86 (79 to 86 (GPESSGKT)) interacts with ATP.

The protein belongs to the RecA family.

The protein resides in the cytoplasm. Can catalyze the hydrolysis of ATP in the presence of single-stranded DNA, the ATP-dependent uptake of single-stranded DNA by duplex DNA, and the ATP-dependent hybridization of homologous single-stranded DNAs. It interacts with LexA causing its activation and leading to its autocatalytic cleavage. The protein is Protein RecA of Streptococcus equi subsp. zooepidemicus (strain MGCS10565).